The chain runs to 339 residues: Pre-mRNA-splicing factor syf2 (339 aa).

The segment at 1 to 136 is disordered; sequence MPPEKKRKTE…LQSDPSQLTA (136 aa). Residues 7–16 show a composition bias toward basic and acidic residues; the sequence is RKTEPEDKAE. Residues 17–37 show a composition bias toward polar residues; the sequence is VTQQENDVAESTTEPNNQTVT. Positions 45 to 93 are enriched in low complexity; the sequence is VTEAALATTSSSSPPVLSASETAQPDTAATSQSSSTPPTSTSAAESAAA. The span at 94-103 shows a compositional bias: basic and acidic residues; the sequence is KARERAERFR. The span at 126–135 shows a compositional bias: polar residues; the sequence is RLQSDPSQLT.

Belongs to the SYF2 family. In terms of assembly, associated with the spliceosome.

The protein localises to the nucleus. Its function is as follows. Involved in pre-mRNA splicing. The protein is Pre-mRNA-splicing factor syf2 (msp-4) of Neurospora crassa (strain ATCC 24698 / 74-OR23-1A / CBS 708.71 / DSM 1257 / FGSC 987).